A 449-amino-acid chain; its full sequence is C4-dicarboxylate transport protein (449 aa).

Positions 1 to 20 (MSALTESFGPVPSAKSKPPA) are disordered. A compositionally biased stretch (low complexity) spans 10-20 (PVPSAKSKPPA). Helical transmembrane passes span 28 to 48 (LLYL…WLSP), 66 to 86 (LIKM…IAHI), 101 to 121 (LYFE…GNVV), 167 to 187 (GDIL…MTLG), 205 to 225 (FGVI…AMAF), 241 to 261 (LIAV…GLIA), 326 to 346 (IYMT…LTWT), and 370 to 390 (FITL…GMAI).

This sequence belongs to the dicarboxylate/amino acid:cation symporter (DAACS) (TC 2.A.23) family.

It localises to the cell inner membrane. Responsible for the transport of dicarboxylates such as succinate, fumarate, and malate from the periplasm across the membrane. This Rhodopseudomonas palustris (strain BisB18) protein is C4-dicarboxylate transport protein.